We begin with the raw amino-acid sequence, 567 residues long: Proline--tRNA ligase (567 aa).

It belongs to the class-II aminoacyl-tRNA synthetase family. ProS type 1 subfamily. As to quaternary structure, homodimer.

The protein resides in the cytoplasm. The catalysed reaction is tRNA(Pro) + L-proline + ATP = L-prolyl-tRNA(Pro) + AMP + diphosphate. Its function is as follows. Catalyzes the attachment of proline to tRNA(Pro) in a two-step reaction: proline is first activated by ATP to form Pro-AMP and then transferred to the acceptor end of tRNA(Pro). As ProRS can inadvertently accommodate and process non-cognate amino acids such as alanine and cysteine, to avoid such errors it has two additional distinct editing activities against alanine. One activity is designated as 'pretransfer' editing and involves the tRNA(Pro)-independent hydrolysis of activated Ala-AMP. The other activity is designated 'posttransfer' editing and involves deacylation of mischarged Ala-tRNA(Pro). The misacylated Cys-tRNA(Pro) is not edited by ProRS. This Campylobacter fetus subsp. fetus (strain 82-40) protein is Proline--tRNA ligase.